The following is a 320-amino-acid chain: tRNA dimethylallyltransferase (320 aa).

5-12 (GPTAVGKS) is an ATP binding site. Substrate is bound at residue 7 to 12 (TAVGKS). The segment at 30–33 (DSMQ) is interaction with substrate tRNA.

This sequence belongs to the IPP transferase family. As to quaternary structure, monomer. Mg(2+) is required as a cofactor.

It catalyses the reaction adenosine(37) in tRNA + dimethylallyl diphosphate = N(6)-dimethylallyladenosine(37) in tRNA + diphosphate. In terms of biological role, catalyzes the transfer of a dimethylallyl group onto the adenine at position 37 in tRNAs that read codons beginning with uridine, leading to the formation of N6-(dimethylallyl)adenosine (i(6)A). This Heliobacterium modesticaldum (strain ATCC 51547 / Ice1) protein is tRNA dimethylallyltransferase.